The sequence spans 64 residues: Myotoxin-2 (64 aa).

The N-terminal stretch at 1–21 (KILYLLFAFLFLAFLSEPGNA) is a signal peptide. Cysteines 32 and 51 form a disulfide.

The protein belongs to the crotamine-myotoxin family. In terms of assembly, monomer. As to expression, expressed by the venom gland.

The protein localises to the secreted. Functionally, cationic peptide that possesses multiple functions. It acts as a cell-penetrating peptide (CPP), and as a potent voltage-gated potassium channel (Kv) inhibitor. It exhibits antimicrobial activities, hind limb paralysis, and severe muscle necrosis by a non-enzymatic mechanism. The protein is Myotoxin-2 of Crotalus durissus terrificus (South American rattlesnake).